Here is a 377-residue protein sequence, read N- to C-terminus: MTSGSQGAFEAARRIVFKVGSALLVDAETGAANRAWLEAFCADAADLRAAGKQVLVVSSGAVALGRRRLGLTGRKTTLPEKQAAAAAGQSLLMRAWEEAFEPHGIGVAQILLTRDDTEMRRRWLNARATTETLMGLGVVPVVNENDTVVTEEIRYGDNDRLAARVAQMAGADLLVLLSDIDGLYTADPRKNPKAQHIPRVSEITPEIAGMAEGANAAAGVGTGGMATKIAAARIARAAGCATLITLGSRPRPLAAIAAGEKATLIEAGASPAAAYKAWIAGSLAPQGWVTVDAGAASALLAGKSLLPAGVRAVEGPFDKGDAVRVRDENGREVARGLVRYDSADAQRIAGLRSDAIEAELGFTEGPMIHADDLAVAH.

Residue lysine 18 coordinates ATP. Substrate-binding residues include serine 59, aspartate 146, and asparagine 158. ATP is bound by residues 178–179 and 222–228; these read SD and TGGMATK. A PUA domain is found at 286–363; the sequence is QGWVTVDAGA…DAIEAELGFT (78 aa).

Belongs to the glutamate 5-kinase family.

The protein resides in the cytoplasm. It carries out the reaction L-glutamate + ATP = L-glutamyl 5-phosphate + ADP. It participates in amino-acid biosynthesis; L-proline biosynthesis; L-glutamate 5-semialdehyde from L-glutamate: step 1/2. Functionally, catalyzes the transfer of a phosphate group to glutamate to form L-glutamate 5-phosphate. This Caulobacter vibrioides (strain ATCC 19089 / CIP 103742 / CB 15) (Caulobacter crescentus) protein is Glutamate 5-kinase.